Reading from the N-terminus, the 208-residue chain is Tektin bundle-interacting protein 1 (208 aa).

In terms of assembly, microtubule inner protein component of sperm flagellar doublet microtubules. As to expression, expressed in trachea multiciliated cells.

It localises to the cytoplasm. The protein localises to the cytoskeleton. It is found in the cilium axoneme. Its subcellular location is the flagellum axoneme. Microtubule inner protein (MIP) part of the dynein-decorated doublet microtubules (DMTs) in cilia axoneme, which is required for motile cilia beating. Located at the center of the tektin bundle where may function to recruit tektins or stabilize the bundle. This Bos taurus (Bovine) protein is Tektin bundle-interacting protein 1 (TEKTIP1).